Consider the following 160-residue polypeptide: Cytochrome b6-f complex subunit 4 (160 aa).

The next 3 membrane-spanning stretches (helical) occupy residues 36-56 (ILYM…GLAI), 95-115 (LLGI…PFIE), and 127-147 (PIAM…GAGA).

The protein belongs to the cytochrome b family. PetD subfamily. The 4 large subunits of the cytochrome b6-f complex are cytochrome b6, subunit IV (17 kDa polypeptide, PetD), cytochrome f and the Rieske protein, while the 4 small subunits are PetG, PetL, PetM and PetN. The complex functions as a dimer.

It localises to the cellular thylakoid membrane. Component of the cytochrome b6-f complex, which mediates electron transfer between photosystem II (PSII) and photosystem I (PSI), cyclic electron flow around PSI, and state transitions. This chain is Cytochrome b6-f complex subunit 4, found in Synechocystis sp. (strain ATCC 27184 / PCC 6803 / Kazusa).